Consider the following 562-residue polypeptide: NAD-dependent malic enzyme (562 aa).

Y101 functions as the Proton donor in the catalytic mechanism. R154 provides a ligand contact to NAD(+). The Proton acceptor role is filled by K172. Positions 243, 244, and 267 each coordinate a divalent metal cation. NAD(+) contacts are provided by D267 and N415.

It belongs to the malic enzymes family. Homotetramer. Requires Mg(2+) as cofactor. Mn(2+) serves as cofactor.

It carries out the reaction (S)-malate + NAD(+) = pyruvate + CO2 + NADH. The catalysed reaction is oxaloacetate + H(+) = pyruvate + CO2. This chain is NAD-dependent malic enzyme, found in Shewanella woodyi (strain ATCC 51908 / MS32).